A 205-amino-acid polypeptide reads, in one-letter code: LexA repressor (205 aa).

The H-T-H motif DNA-binding region spans 28–48 (RAEIATRLGFKSANAAEEHLK). Catalysis depends on for autocatalytic cleavage activity residues Ser-122 and Lys-159.

It belongs to the peptidase S24 family. In terms of assembly, homodimer.

It catalyses the reaction Hydrolysis of Ala-|-Gly bond in repressor LexA.. Represses a number of genes involved in the response to DNA damage (SOS response), including recA and lexA. In the presence of single-stranded DNA, RecA interacts with LexA causing an autocatalytic cleavage which disrupts the DNA-binding part of LexA, leading to derepression of the SOS regulon and eventually DNA repair. This chain is LexA repressor, found in Shewanella denitrificans (strain OS217 / ATCC BAA-1090 / DSM 15013).